A 214-amino-acid polypeptide reads, in one-letter code: Pyridoxine/pyridoxamine 5'-phosphate oxidase (214 aa).

Residues 9-12 (RREY) and K67 contribute to the substrate site. Residues 62 to 67 (RTVLLK), 77 to 78 (YS), R83, K84, and Q106 each bind FMN. Y124, R128, and S132 together coordinate substrate. FMN contacts are provided by residues 141–142 (QS) and W186. 192 to 194 (RLH) is a substrate binding site. R196 contacts FMN.

The protein belongs to the pyridoxamine 5'-phosphate oxidase family. As to quaternary structure, homodimer. The cofactor is FMN.

It catalyses the reaction pyridoxamine 5'-phosphate + O2 + H2O = pyridoxal 5'-phosphate + H2O2 + NH4(+). The enzyme catalyses pyridoxine 5'-phosphate + O2 = pyridoxal 5'-phosphate + H2O2. It functions in the pathway cofactor metabolism; pyridoxal 5'-phosphate salvage; pyridoxal 5'-phosphate from pyridoxamine 5'-phosphate: step 1/1. It participates in cofactor metabolism; pyridoxal 5'-phosphate salvage; pyridoxal 5'-phosphate from pyridoxine 5'-phosphate: step 1/1. Its function is as follows. Catalyzes the oxidation of either pyridoxine 5'-phosphate (PNP) or pyridoxamine 5'-phosphate (PMP) into pyridoxal 5'-phosphate (PLP). In Porphyromonas gingivalis (strain ATCC 33277 / DSM 20709 / CIP 103683 / JCM 12257 / NCTC 11834 / 2561), this protein is Pyridoxine/pyridoxamine 5'-phosphate oxidase.